The following is a 319-amino-acid chain: Thioredoxin reductase (319 aa).

Residues 11 to 14, 40 to 41, glutamine 45, asparagine 54, valine 87, cysteine 145, aspartate 288, and 295 to 297 contribute to the FAD site; these read SGPA, IA, and RQA. Cysteine 142 and cysteine 145 are disulfide-bonded.

It belongs to the class-II pyridine nucleotide-disulfide oxidoreductase family. As to quaternary structure, homodimer. FAD is required as a cofactor.

It localises to the cytoplasm. The catalysed reaction is [thioredoxin]-dithiol + NADP(+) = [thioredoxin]-disulfide + NADPH + H(+). This chain is Thioredoxin reductase (TRR1), found in Yarrowia lipolytica (strain CLIB 122 / E 150) (Yeast).